The chain runs to 739 residues: Adenosylcobalamin-dependent ribonucleoside-triphosphate reductase (739 aa).

Cys119 and Cys419 are oxidised to a cystine. Positions 147–158 (SMPFSFLFDELM) are effector region-1. The interval 168–313 (ARSNISQIPR…ICNLIGKAVV (146 aa)) is effector region-2. Catalysis depends on residues Cys408 and Glu410. The segment at 565–626 (FHYGAYLIQR…NPNFASAGTV (62 aa)) is adenosylcobalamin-binding-1. The tract at residues 685–724 (LQQAPKEPIDKETYEKRSQEITGNVEEVFSQLNSDVKDLE) is adenosylcobalamin-binding-2.

This sequence belongs to the class II ribonucleoside-triphosphate reductase family. As to quaternary structure, monomer. It depends on adenosylcob(III)alamin as a cofactor.

It catalyses the reaction a 2'-deoxyribonucleoside 5'-triphosphate + [thioredoxin]-disulfide + H2O = a ribonucleoside 5'-triphosphate + [thioredoxin]-dithiol. Allosterically regulated by ATP and dNTP. The protein is Adenosylcobalamin-dependent ribonucleoside-triphosphate reductase (rtpR) of Lactobacillus delbrueckii subsp. bulgaricus (strain ATCC BAA-365 / Lb-18).